Here is a 1469-residue protein sequence, read N- to C-terminus: MDISADVDQIIAQAPDWTFAGDCALLALMKRISQNLEERGERTSRNLRDFETSVKQVDIALNNATTSLRSLQFGNQFVEYRVEEVDDADLAMPEEKKKKPELPLKSSEELAKEFLENNLRMFRKNYEPVTIEVPDSDDEDGPVHSTTVFRAKNPYDAIPLPYIIGTKEWQEHKYAGLYDSKENSEDDRSEEFSSSSSDEKEPETKKIATPANKLEEQHLSDSSSLASFAREPAIVSPVINPAVQVAEPVIRTQPRPIINSQRNPHERDMFAALRQSPPSDDPPSTSSSPTSSPAFRNPSSRLPIVSTASLSSSSSSPAQQPPRLFDEAVSTQTPKEAEIKPSQTKRMPVNLFNEDEFKSFMSEIVDKVQSKTPSSSVSPATTISTKEPPKTKKPVEEYPKPGPPKQIVEQTVPKRVNLFDDSPPLSPTPRSEPVFNNTKATGAIPKRSPVVVANNDEDNSLFGSSPAMPKENPSKKPPKPVTKSLFDDDLEDDDFLSSFTPKAKPPEQKLLSKPKPSLFDDDDLDIDDIFTKPSAQPKKLSERVAGKTSLFEDDDQDDVTDLFGSKKAKVIPKETSSGVSPNKNVETPVASKKSLFDDIEDEDLFGTPKAKNLIRSEPDNDPEAVGEDKKQSEIAEQKSKNIETGEKQHQVIAENASVPILRDSPPPMEVTEQKSDDKEWEAVKDDTSAANITKSKDLFSEDLTDDELFSSTSNNMAEPKSANETNEFNKPIEKYTSQTEENVSPVNPPTKLSIKPTDLFNEDFSDDDTFLSASMSKNEPLVGTENEDIKKPSEVQLVKEIKAEELPQQLPENKIYEITAVVEKDELVPEMLSKPQIDEPVSETPPPDDYQSNVDPIISMVADVTNKTSVDTLTPRKPADLAAAQQIMQNYSNLFSDEPPDDSEFFQTLGSSGLSSLSASKIFDNEHDFFEPALPNIPSATKPSPVTPGDQPSVSSDYGAMCLFSDVPPEDNDHAGEEVQKEAEPQKDELASTTRIHTIFYDDFSETARAGAVQPAPKRFPFDDEPPPADETDRSEVKETPELQKPTSPVKKLKMPNININVHALLPGSGSVPKLIRKQESSSSERDEPQATVQTEAEAPSSGQNTVSSADGVLQHVNKSRARGPAKRRPSTRRGRKENYAKSLLDAGQNEGPTASTRDSPEVEHSERSSIKAPSPQYVKPEKLFSTPAQQIQPQLQRPPPSNTGGSFLDSPDEDDSFFNSVPTKTVEGKQGTDPPKSYRSFLDSPDADDKLFSDLENNKAGINVVPVEKKPPKMANSFLASPDEDDFLFDSVKTNATTTAQKAFAAEIMNAFQKVTTAPPKPSNAKEAAKPKSQAAPKLFDDSDDDDDDLFARAPSIQTASKPVQAKQPPKPAATSLFSSDDEEAEVPVKSAPAKKLPVKPSKSLFSDDDDDDDLFGGSSTSKAAAAKKTKPAARTASKPPASKTTTPTATIPSNSGDNPLADLLDFK.

The residue at position 136 (Ser-136) is a Phosphoserine. 2 disordered regions span residues 178-349 and 367-546; these read YDSK…RMPV and KVQS…RVAG. The span at 197–206 shows a compositional bias: basic and acidic residues; that stretch reads SDEKEPETKK. The residue at position 227 (Ser-227) is a Phosphoserine. Composition is skewed to low complexity over residues 276–293 and 306–316; these read SPPS…TSSP and STASLSSSSSS. The short motif at 351-372 is the LFa 1 element; it reads LFNEDEFKSFMSEIVDKVQSKT. Polar residues predominate over residues 370–385; that stretch reads SKTPSSSVSPATTIST. Positions 387–399 are enriched in basic and acidic residues; that stretch reads EPPKTKKPVEEYP. Ser-422 and Ser-426 each carry phosphoserine. The segment covering 519–528 has biased composition (acidic residues); the sequence is FDDDDLDIDD. The LFa 5 signature appears at 550–563; it reads LFEDDDQDDVTDLF. Residues 571–591 are disordered; that stretch reads IPKETSSGVSPNKNVETPVAS. Positions 574-585 are enriched in polar residues; sequence ETSSGVSPNKNV. At Ser-580 the chain carries Phosphoserine. At Thr-587 the chain carries Phosphothreonine. The short motif at 595–605 is the LFa 6 element; that stretch reads LFDDIEDEDLF. Disordered regions lie at residues 607-760, 933-1254, and 1316-1469; these read TPKA…TDLF, ALPN…KLFS, and VTTA…LDFK. 2 stretches are compositionally biased toward basic and acidic residues: residues 626–649 and 671–687; these read GEDK…EKQH and TEQK…KDDT. Thr-693 bears the Phosphothreonine mark. The short motif at 698–709 is the LFa 8 element; it reads LFSEDLTDDELF. Polar residues-rich tracts occupy residues 709-728, 735-745, and 938-956; these read FSST…TNEF, YTSQTEENVSP, and PSAT…SVSS. 3 stretches are compositionally biased toward basic and acidic residues: residues 971-990, 1031-1042, and 1077-1089; these read DNDH…KDEL, ETDRSEVKETPE, and RKQE…RDEP. Positions 1091–1109 are enriched in polar residues; sequence ATVQTEAEAPSSGQNTVSS. A compositionally biased stretch (basic residues) spans 1118–1136; sequence NKSRARGPAKRRPSTRRGR. A compositionally biased stretch (basic and acidic residues) spans 1159–1170; the sequence is DSPEVEHSERSS. Phosphoserine occurs at positions 1241, 1245, 1254, 1344, 1380, 1381, and 1408. Low complexity-rich tracts occupy residues 1417-1426 and 1434-1452; these read FGGSSTSKAA and AART…PTAT.

Belongs to the FAM21 family. In terms of assembly, component of the WASH complex.

Acts at least in part as component of the WASH complex which may regulate wash nucleation-promoting factor (NPF) activity and is required for its membrane targeting during endosomal sorting. This chain is WASH complex subunit 2, found in Drosophila melanogaster (Fruit fly).